Here is a 1188-residue protein sequence, read N- to C-terminus: MLNGAGLDKALKMSLPRRSRIRSSVGPVRSSLGYKKAEDEMSRATSVGDQLEAPARTIYLNQPHLNKFRDNQISTAKYSVLTFLPRFLYEQIRRAANAFFLFIALLQQIPDVSPTGRYTTLVPLIIILTIAGIKEIVEDFKRHKADNAVNKKKTIVLRNGMWHTIMWKEVAVGDIVKVVNGQYLPADVVLLSSSEPQAMCYVETANLDGETNLKIRQGLSHTADMQTREVLMKLSGTIECEGPNRHLYDFTGNLNLDGKSLVALGPDQILLRGTQLRNTQWVFGIVVYTGHDTKLMQNSTKAPLKRSNVEKVTNVQILVLFGILLVMALVSSAGALYWNRSHGEKNWYIKKMDTTSDNFGYNLLTFIILYNNLIPISLLVTLEVVKYTQALFINWDTDMYYIGNDTPAMARTSNLNEELGQVKYLFSDKTGTLTCNIMNFKKCSIAGVTYGHFPELAREPSSDDFCRMPPPCSDSCDFDDPRLLKNIEDRHPTAPCIQEFLTLLAVCHTVVPEKDGDNIIYQASSPDEAALVKGAKKLGFVFTARTPFSVIIEAMGQEQTFGILNVLEFSSDRKRMSVIVRTPSGRLRLYCKGADNVIFERLSKDSKYMEETLCHLEYFATEGLRTLCVAYADLSENEYEEWLKVYQEASTILKDRAQRLEECYEIIEKNLLLLGATAIEDRLQAGVPETIATLLKAEIKIWVLTGDKQETAINIGYSCRLVSQNMALILLKEDSLDATRAAITQHCTDLGNLLGKENDVALIIDGHTLKYALSFEVRRSFLDLALSCKAVICCRVSPLQKSEIVDVVKKRVKAITLAIGDGANDVGMIQTAHVGVGISGNEGMQATNNSDYAIAQFSYLEKLLLVHGAWSYNRVTKCILYCFYKNVVLYIIELWFAFVNGFSGQILFERWCIGLYNVIFTALPPFTLGIFERSCTQESMLRFPQLYKITQNGEGFNTKVFWGHCINALVHSLILFWFPMKALEHDTVLTSGHATDYLFVGNIVYTYVVVTVCLKAGLETTAWTKFSHLAVWGSMLTWLVFFGIYSTIWPTIPIAPDMRGQATMVLSSAHFWLGLFLVPTACLIEDVAWRAAKHTCKKTLLEEVQELETKSRVLGKAVLRDSNGKRLNERDRLIKRLGRKTPPTLFRGSSLQQGVPHGYAFSQEEHGAVSQEEVIRAYDTTKKKSRKK.

Residues 1–94 (MLNGAGLDKA…PRFLYEQIRR (94 aa)) are Cytoplasmic-facing. At T45 the chain carries Phosphothreonine. The helical transmembrane segment at 95–115 (AANAFFLFIALLQQIPDVSPT) threads the bilayer. The Extracellular portion of the chain corresponds to 116–119 (GRYT). A helical transmembrane segment spans residues 120–140 (TLVPLIIILTIAGIKEIVEDF). The Cytoplasmic segment spans residues 141–316 (KRHKADNAVN…SNVEKVTNVQ (176 aa)). A helical transmembrane segment spans residues 317-337 (ILVLFGILLVMALVSSAGALY). The Extracellular segment spans residues 338 to 364 (WNRSHGEKNWYIKKMDTTSDNFGYNLL). Residues 365–385 (TFIILYNNLIPISLLVTLEVV) traverse the membrane as a helical segment. Over 386-887 (KYTQALFINW…CILYCFYKNV (502 aa)) the chain is Cytoplasmic. D428 serves as the catalytic 4-aspartylphosphate intermediate. ATP-binding residues include D428, K429, T430, E528, F569, K592, R625, T705, G706, D707, R795, and K801. D428 contributes to the Mg(2+) binding site. Residue T430 participates in Mg(2+) binding. D821 serves as a coordination point for Mg(2+). ATP is bound by residues N824 and D825. D825 provides a ligand contact to Mg(2+). A helical membrane pass occupies residues 888–908 (VLYIIELWFAFVNGFSGQILF). The Extracellular segment spans residues 909 to 910 (ER). Residues 911–931 (WCIGLYNVIFTALPPFTLGIF) traverse the membrane as a helical segment. Over 932-959 (ERSCTQESMLRFPQLYKITQNGEGFNTK) the chain is Cytoplasmic. A helical membrane pass occupies residues 960–980 (VFWGHCINALVHSLILFWFPM). At 981–997 (KALEHDTVLTSGHATDY) the chain is on the extracellular side. Residues 998–1018 (LFVGNIVYTYVVVTVCLKAGL) traverse the membrane as a helical segment. Residues 1019-1028 (ETTAWTKFSH) are Cytoplasmic-facing. A helical membrane pass occupies residues 1029–1049 (LAVWGSMLTWLVFFGIYSTIW). Topologically, residues 1050–1063 (PTIPIAPDMRGQAT) are extracellular. The chain crosses the membrane as a helical span at residues 1064–1084 (MVLSSAHFWLGLFLVPTACLI). At 1085–1188 (EDVAWRAAKH…DTTKKKSRKK (104 aa)) the chain is on the cytoplasmic side. Residues 1162–1188 (SQEEHGAVSQEEVIRAYDTTKKKSRKK) form a disordered region. Positions 1163–1182 (QEEHGAVSQEEVIRAYDTTK) are enriched in basic and acidic residues.

This sequence belongs to the cation transport ATPase (P-type) (TC 3.A.3) family. Type IV subfamily. Component of a P4-ATPase flippase complex which consists of a catalytic alpha subunit and an accessory beta subunit. Interacts with TMEM30A to form a flippase complex. It depends on Mg(2+) as a cofactor. Strongly expressed in the brain, cerebellum, retina and testis.

Its subcellular location is the membrane. It localises to the golgi apparatus membrane. It is found in the endosome membrane. The protein resides in the cell membrane. The protein localises to the photoreceptor outer segment membrane. Its subcellular location is the photoreceptor inner segment membrane. The catalysed reaction is ATP + H2O + phospholipidSide 1 = ADP + phosphate + phospholipidSide 2.. It catalyses the reaction a 1,2-diacyl-sn-glycero-3-phospho-L-serine(out) + ATP + H2O = a 1,2-diacyl-sn-glycero-3-phospho-L-serine(in) + ADP + phosphate + H(+). It carries out the reaction a 1,2-diacyl-sn-glycero-3-phosphoethanolamine(in) + ATP + H2O = a 1,2-diacyl-sn-glycero-3-phosphoethanolamine(out) + ADP + phosphate + H(+). In terms of biological role, catalytic component of a P4-ATPase flippase complex which catalyzes the hydrolysis of ATP coupled to the transport of aminophospholipids from the outer to the inner leaflet of various membranes and ensures the maintenance of asymmetric distribution of phospholipids. Able to translocate phosphatidylserine, but not phosphatidylcholine. Phospholipid translocation also seems to be implicated in vesicle formation and in uptake of lipid signaling molecules. Reconstituted to liposomes, the ATP8A2:TMEM30A flippase complex predominantly transports phosphatidylserine (PS) and to a lesser extent phosphatidylethanolamine (PE). Phospholipid translocation is not associated with a countertransport of an inorganic ion or other charged substrate from the cytoplasmic side toward the exoplasm in connection with the phosphorylation from ATP. ATP8A2:TMEM30A may be involved in regulation of neurite outgrowth. Proposed to function in the generation and maintenance of phospholipid asymmetry in photoreceptor disk membranes and neuronal axon membranes. May be involved in vesicle trafficking in neuronal cells. Required for normal visual and auditory function; involved in photoreceptor and inner ear spiral ganglion cell survival. The polypeptide is Phospholipid-transporting ATPase IB (Homo sapiens (Human)).